A 522-amino-acid chain; its full sequence is Glucans biosynthesis protein G (522 aa).

The N-terminal stretch at 1–33 (MPNNKFFVKSSKASLRWLGATVLLTLYALPSWA) is a signal peptide.

Belongs to the OpgD/OpgG family.

It is found in the periplasm. Its pathway is glycan metabolism; osmoregulated periplasmic glucan (OPG) biosynthesis. In terms of biological role, involved in the biosynthesis of osmoregulated periplasmic glucans (OPGs). The chain is Glucans biosynthesis protein G from Sodalis glossinidius (strain morsitans).